We begin with the raw amino-acid sequence, 199 residues long: NAD(P)H-quinone oxidoreductase chain 6 (199 aa).

5 helical membrane-spanning segments follow: residues Ile-9–Leu-29, Val-32–Leu-52, Ala-61–Val-81, Leu-102–Ile-122, and Phe-143–Val-163.

This sequence belongs to the complex I subunit 6 family.

It is found in the membrane. The catalysed reaction is a plastoquinone + NADH + (n+1) H(+)(in) = a plastoquinol + NAD(+) + n H(+)(out). The enzyme catalyses a plastoquinone + NADPH + (n+1) H(+)(in) = a plastoquinol + NADP(+) + n H(+)(out). NDH-1 shuttles electrons from NAD(P)H, via FMN and iron-sulfur (Fe-S) centers, to quinones in the respiratory chain. The immediate electron acceptor for the enzyme in this species is believed to be plastoquinone. Couples the redox reaction to proton translocation (for every two electrons transferred, four hydrogen ions are translocated across the cytoplasmic membrane), and thus conserves the redox energy in a proton gradient. The chain is NAD(P)H-quinone oxidoreductase chain 6 (ndhG) from Leptolyngbya boryana (Plectonema boryanum).